A 309-amino-acid polypeptide reads, in one-letter code: Probable ABC transporter permease protein YqgH (309 aa).

The next 6 membrane-spanning stretches (helical) occupy residues 30–50, 88–108, 133–153, 165–185, 214–234, and 280–300; these read MIVT…TIFL, FIFG…PLGI, LVGI…VPFI, LLAG…SISA, LVPA…ARAF, and NTLW…ILLI. The ABC transmembrane type-1 domain occupies 89-300; the sequence is IFGSFAVTIL…VMSFLFILLI (212 aa).

The protein belongs to the binding-protein-dependent transport system permease family. CysTW subfamily.

The protein localises to the cell membrane. Its function is as follows. Part of the binding-protein-dependent transport system YqgGHIJK. Probably responsible for the translocation of the substrate across the membrane. The polypeptide is Probable ABC transporter permease protein YqgH (yqgH) (Bacillus subtilis (strain 168)).